A 392-amino-acid polypeptide reads, in one-letter code: Fasciculation and elongation protein zeta-1 (392 aa).

Residues 1–36 are disordered; sequence MEAPLVSLDEEFEDIRPSCTEEPEEKPQCLYGTSPH. Serine 58 bears the Phosphoserine mark. Residues 175-196 are disordered; the sequence is MQNSPDPEEEEEVLEEEDGGEI. Over residues 180-194 the composition is skewed to acidic residues; it reads DPEEEEEVLEEEDGG. The stretch at 230–298 forms a coiled coil; it reads SELTELLDRV…KKRRKEKGLS (69 aa). Residues serine 298 and serine 316 each carry the phosphoserine modification.

This sequence belongs to the zygin family. As to quaternary structure, homodimer. Interacts with the NH2-terminal variable region (V1) of PKC zeta and weakly with that of PKC epsilon. Interacts with UBE4B and SAP30L. Interacts with SCOC and ULK1; SCOC interferes with ULK1-binding to FEZ1. Directly interacts with SCOC and UVRAG. Stabilizes the interaction between SCOC and UVRAG during amino acid starvation. Post-translationally, phosphorylated by protein kinase C zeta; which enhances interaction with UBE4B and polyubiquitination. Polyubiquitinated in a UBE4B-dependent manner; which does not lead to proteasomal degradation and may be important for neurogenic activity. Polyubiquitin linkage seems to be mainly through Lys-26.

It is found in the cytoplasm. It localises to the cytoskeleton. Its subcellular location is the microtubule organizing center. The protein resides in the centrosome. The protein localises to the cell membrane. Functionally, may be involved in axonal outgrowth as component of the network of molecules that regulate cellular morphology and axon guidance machinery. May participate in the transport of mitochondria and other cargos along microtubules. The protein is Fasciculation and elongation protein zeta-1 (Fez1) of Mus musculus (Mouse).